The primary structure comprises 194 residues: uncharacterized protein (194 aa).

A compositionally biased stretch (polar residues) spans 77–92 (QTQPQHQTLSQHLPQT). Residues 77–96 (QTQPQHQTLSQHLPQTHHTD) are disordered. The chain crosses the membrane as a helical span at residues 169–189 (FWEILLLIILIAVLVYGIYWL).

The protein localises to the host membrane. Its subcellular location is the virion. This is an uncharacterized protein from Acanthamoeba polyphaga (Amoeba).